Reading from the N-terminus, the 277-residue chain is RNA-binding protein pno-1 (277 aa).

2 disordered regions span residues M1–K52 and D72–R100. Over residues F8–V27 the composition is skewed to acidic residues. The span at T30–D40 shows a compositional bias: polar residues. The segment covering D72–D81 has biased composition (acidic residues). One can recognise a KH domain in the interval G198–V250.

It belongs to the PNO1 family. As to quaternary structure, part of the small subunit (SSU) processome, composed of more than 70 proteins and the RNA chaperone small nucleolar RNA (snoRNA) U3.

The protein localises to the nucleus. It is found in the nucleolus. In terms of biological role, part of the small subunit (SSU) processome, first precursor of the small eukaryotic ribosomal subunit. During the assembly of the SSU processome in the nucleolus, many ribosome biogenesis factors, an RNA chaperone and ribosomal proteins associate with the nascent pre-rRNA and work in concert to generate RNA folding, modifications, rearrangements and cleavage as well as targeted degradation of pre-ribosomal RNA by the RNA exosome. Positively regulates dimethylation of two adjacent adenosines in the loop of a conserved hairpin near the 3'-end of 18S rRNA. In Caenorhabditis elegans, this protein is RNA-binding protein pno-1.